We begin with the raw amino-acid sequence, 212 residues long: Phosphatidylserine decarboxylase proenzyme (212 aa).

The active-site Schiff-base intermediate with substrate; via pyruvic acid is serine 182. A Pyruvic acid (Ser); by autocatalysis modification is found at serine 182.

This sequence belongs to the phosphatidylserine decarboxylase family. PSD-A subfamily. As to quaternary structure, heterodimer of a large membrane-associated beta subunit and a small pyruvoyl-containing alpha subunit. The cofactor is pyruvate. In terms of processing, is synthesized initially as an inactive proenzyme. Formation of the active enzyme involves a self-maturation process in which the active site pyruvoyl group is generated from an internal serine residue via an autocatalytic post-translational modification. Two non-identical subunits are generated from the proenzyme in this reaction, and the pyruvate is formed at the N-terminus of the alpha chain, which is derived from the carboxyl end of the proenzyme. The post-translation cleavage follows an unusual pathway, termed non-hydrolytic serinolysis, in which the side chain hydroxyl group of the serine supplies its oxygen atom to form the C-terminus of the beta chain, while the remainder of the serine residue undergoes an oxidative deamination to produce ammonia and the pyruvoyl prosthetic group on the alpha chain.

It localises to the cell membrane. It carries out the reaction a 1,2-diacyl-sn-glycero-3-phospho-L-serine + H(+) = a 1,2-diacyl-sn-glycero-3-phosphoethanolamine + CO2. Its pathway is phospholipid metabolism; phosphatidylethanolamine biosynthesis; phosphatidylethanolamine from CDP-diacylglycerol: step 2/2. Functionally, catalyzes the formation of phosphatidylethanolamine (PtdEtn) from phosphatidylserine (PtdSer). This is Phosphatidylserine decarboxylase proenzyme from Pelodictyon phaeoclathratiforme (strain DSM 5477 / BU-1).